Here is a 208-residue protein sequence, read N- to C-terminus: WEB family protein At2g17940 (208 aa).

Residues 78–113 (RTLQLNTSLSNRIKTLTQELELGKKEIQRLSRTRSS) are a coiled coil.

This sequence belongs to the WEB family.

This chain is WEB family protein At2g17940, found in Arabidopsis thaliana (Mouse-ear cress).